The sequence spans 233 residues: Peptidyl-tRNA hydrolase (233 aa).

Tyrosine 14 contacts tRNA. The active-site Proton acceptor is histidine 19. Phenylalanine 64, asparagine 66, and asparagine 112 together coordinate tRNA. The segment at 187–233 (VSPRRSGTGQKGKDKPPAPAKQQATATKAEPEPDTRSALQKLMERFK) is disordered.

It belongs to the PTH family. Monomer.

It localises to the cytoplasm. It catalyses the reaction an N-acyl-L-alpha-aminoacyl-tRNA + H2O = an N-acyl-L-amino acid + a tRNA + H(+). In terms of biological role, hydrolyzes ribosome-free peptidyl-tRNAs (with 1 or more amino acids incorporated), which drop off the ribosome during protein synthesis, or as a result of ribosome stalling. Functionally, catalyzes the release of premature peptidyl moieties from peptidyl-tRNA molecules trapped in stalled 50S ribosomal subunits, and thus maintains levels of free tRNAs and 50S ribosomes. This Roseobacter denitrificans (strain ATCC 33942 / OCh 114) (Erythrobacter sp. (strain OCh 114)) protein is Peptidyl-tRNA hydrolase.